The following is a 201-amino-acid chain: Imidazole glycerol phosphate synthase subunit HisH 1 (201 aa).

A Glutamine amidotransferase type-1 domain is found at 1–201; sequence MIALIDYKAG…LKLLENFIRL (201 aa). The active-site Nucleophile is the Cys80. Active-site residues include His183 and Glu185.

Heterodimer of HisH and HisF.

The protein localises to the cytoplasm. It catalyses the reaction 5-[(5-phospho-1-deoxy-D-ribulos-1-ylimino)methylamino]-1-(5-phospho-beta-D-ribosyl)imidazole-4-carboxamide + L-glutamine = D-erythro-1-(imidazol-4-yl)glycerol 3-phosphate + 5-amino-1-(5-phospho-beta-D-ribosyl)imidazole-4-carboxamide + L-glutamate + H(+). The catalysed reaction is L-glutamine + H2O = L-glutamate + NH4(+). It participates in amino-acid biosynthesis; L-histidine biosynthesis; L-histidine from 5-phospho-alpha-D-ribose 1-diphosphate: step 5/9. IGPS catalyzes the conversion of PRFAR and glutamine to IGP, AICAR and glutamate. The HisH subunit provides the glutamine amidotransferase activity that produces the ammonia necessary to HisF for the synthesis of IGP and AICAR. The sequence is that of Imidazole glycerol phosphate synthase subunit HisH 1 from Campylobacter jejuni (strain RM1221).